A 489-amino-acid polypeptide reads, in one-letter code: Ulvan Lyase-PL25 (489 aa).

Positions Met-1–Gly-31 are cleaved as a signal peptide. Cys-32 is lipidated: N-palmitoyl cysteine. Cys-32 carries S-diacylglycerol cysteine lipidation. Substrate-binding residues include Asn-60 and Asn-122. His-123 functions as the Proton donor in the catalytic mechanism. Positions 125 and 143 each coordinate substrate. The active-site Proton acceptor is Tyr-188. Positions 204, 208, and 246 each coordinate substrate. His-208 contacts Zn(2+). Residues His-264, Cys-266, and His-278 each contribute to the Zn(2+) site. His-278 is a substrate binding site.

The protein belongs to the polysaccharide lyase 25 family.

The protein resides in the cell membrane. In terms of biological role, ulvan lyase involved in ulvan degradation. Ulvan is the main polysaccharide component of the Ulvales (green seaweed) cell wall. It is composed of disaccharide building blocks comprising 3-sulfated rhamnose (Rha3S) linked to D-glucuronic acid (GlcA), L-iduronic acid (IduA), or D-xylose (Xyl). Ulvan lyase catalyzes the endolytic cleavage of the glycosidic bond between Rha3S and the uronic acids GlcA or IduA, producing oligosaccharides that have unsaturated 4-deoxy-L-threo-hex-4-enopyranosiduronic acid (deltaUA) at the non-reducing end. This results eventually in the degradation of the ulvan polysaccharide into deltaUA-Rha3S disaccharides and deltaUA-Rha3S-Xyl-Rha3S tetrasaccharides. This chain is Ulvan Lyase-PL25, found in Pseudoalteromonas sp. (strain PLSV).